A 265-amino-acid polypeptide reads, in one-letter code: Orphan methyltransferase M.BamHII (265 aa).

Belongs to the N(4)/N(6)-methyltransferase family. N(4) subfamily.

The catalysed reaction is a 2'-deoxycytidine in DNA + S-adenosyl-L-methionine = an N(4)-methyl-2'-deoxycytidine in DNA + S-adenosyl-L-homocysteine + H(+). In terms of biological role, a beta subtype methylase, recognizes the double-stranded sequence 5'-GGATCC-3', methylates C-? on both strands. No endonuclease has been identified for this methylase, although it is speculated it might protect against BamHI. The protein is Orphan methyltransferase M.BamHII (bamHIIM) of Bacillus amyloliquefaciens (Bacillus velezensis).